Consider the following 425-residue polypeptide: Aromatic prenyl transferase PC-22 (425 aa).

Residues 83–84 (GI) and E92 contribute to the L-tryptophan site. Positions 107, 198, 200, 265, 267, 269, 345, 410, and 414 each coordinate substrate.

The protein belongs to the tryptophan dimethylallyltransferase family. As to quaternary structure, homodimer.

Its pathway is secondary metabolite biosynthesis. Functionally, aromatic prenyl transferase; part of the gene cluster that mediates the biosynthesis of the indole diterpenes penitrems. The geranylgeranyl diphosphate (GGPP) synthase penG catalyzes the first step in penitrem biosynthesis via conversion of farnesyl pyrophosphate and isopentyl pyrophosphate into geranylgeranyl pyrophosphate (GGPP). Condensation of indole-3-glycerol phosphate with GGPP by the prenyl transferase penC then forms 3-geranylgeranylindole (3-GGI). Epoxidation by the FAD-dependent monooxygenase penM leads to a epoxidized-GGI that is substrate of the terpene cyclase penB for cyclization to yield paspaline. Paspaline is subsequently converted to 13-desoxypaxilline by the cytochrome P450 monooxygenase penP, the latter being then converted to paxilline by the cytochrome P450 monooxygenase penQ. Paxilline is converted to beta-paxitriol via C-10 ketoreduction by the short-chain dehydrogenase PC-15 which can be monoprenylated at the C-20 by the indole diterpene prenyltransferase penD. A two-step elimination (acetylation and elimination) process performed by the O-acetyltransferase PC-16 and the P.simplicissimum ptmI-ortholog not yet identified in P.crustosum, leads to the production of the prenylated form of penijanthine. The FAD-linked oxidoreductase ptmO then converts the prenylated form of penijanthine into PC-M5 which is in turn transformed into PC-M4 by the aromatic dimethylallyltransferase PC-22. A series of oxidation steps involving 4 cytochrome P450 monooxygenases (PC-21, PC-05, PC-23, PC-20) and a FAD-dependent monooxygenase (PC-14) are required for the transformation of PC-M4 to penitrems A and E. Synthesis of these final products is proposed to proceed via penitrems D and C (PC-21, PC-05, PC-14) and penitrems B and F (PC-21, PC-05, PC-14, PC-23). This is Aromatic prenyl transferase PC-22 from Penicillium crustosum (Blue mold fungus).